The following is a 160-amino-acid chain: Nucleotide-binding protein VF_1240 (160 aa).

Belongs to the YajQ family.

Its function is as follows. Nucleotide-binding protein. This is Nucleotide-binding protein VF_1240 from Aliivibrio fischeri (strain ATCC 700601 / ES114) (Vibrio fischeri).